Here is a 173-residue protein sequence, read N- to C-terminus: Protein TraS (173 aa).

The protein localises to the cell inner membrane. In terms of biological role, involved in surface exclusion. The sequence is that of Protein TraS (traS) from Escherichia coli (strain K12).